Consider the following 1982-residue polypeptide: CASP8-associated protein 2 (1982 aa).

A2 is subject to N-acetylalanine. Residue S20 is modified to Phosphoserine. Positions 159 to 191 are enriched in basic and acidic residues; it reads VKTKDLKSRSPHLDDCSKTDHRAKSDVSKDVHH. The tract at residues 159–552 is disordered; the sequence is VKTKDLKSRS…ESGPNETKNK (394 aa). A Phosphoserine modification is found at S194. Residues 198-210 are compositionally biased toward basic and acidic residues; that stretch reads LEKEGKPHSDKRS. Positions 225–240 are enriched in polar residues; it reads GVWSRSHYQVGEGSSN. The span at 286-395 shows a compositional bias: basic and acidic residues; it reads GHPEKYGKGE…ERASLPHSKN (110 aa). Residues 396-405 are compositionally biased toward polar residues; sequence EITFSHNSSK. Basic and acidic residues-rich tracts occupy residues 406-423, 444-455, and 463-524; these read YHLE…DKSV, KNIDSKEVDAMH, and KAER…KGEV. S567 carries the post-translational modification Phosphoserine. Residues 569–593 are disordered; the sequence is AKKQPVSQDNQHKITDIPKSSGVCD. S658, S815, and S875 each carry phosphoserine. Disordered stretches follow at residues 875-1017, 1157-1188, and 1251-1283; these read SPPQ…DKVM, FGRD…DNSN, and ERSL…HATL. Residues 894–904 are compositionally biased toward polar residues; it reads SAHSTSKSQSD. 4 stretches are compositionally biased toward basic and acidic residues: residues 905–924, 936–965, 999–1016, and 1157–1170; these read LNKE…EADT, GEIR…DVRK, KRPD…KDKV, and FGRD…EKTS. S940 is subject to Phosphoserine. Phosphoserine is present on S1161. Composition is skewed to polar residues over residues 1171–1181 and 1269–1281; these read KQNAQYSNSQK and GSSI…SQHA. K1343 carries the N6-acetyllysine modification. The SUMO interaction motif 1 (SIM); mediates the binding to polysumoylated substrates motif lies at 1683–1687; sequence YVDLT. Positions 1709–1982 are NCOA2-binding; it reads DQLGCSGGNL…MKLFEKSKCR (274 aa). The SUMO interaction motif 2 (SIM); mediates the binding to polysumoylated substrates signature appears at 1737-1741; the sequence is FIDLT. The SUMO interaction motif 3 (SIM); mediates the binding to polysumoylated substrates motif lies at 1794 to 1798; sequence YIDLT. Positions 1803–1909 are disordered; the sequence is SSCEVKKDEL…IKDSSAALAT (107 aa). A compositionally biased stretch (basic and acidic residues) spans 1851-1865; sequence KETDLTNKEKTKKPT.

Self-associates. Component of the death-inducing signaling complex (DISC) with CASP8, FADD and FAS. Interacts with NCOA2 and NCOA3. Interacts with SRRT. Interacts with TRAF2. Interacts with NPAT. Interacts (via SIM domains) with SUMO1 and SUMO2. Interacts with SP100; may negatively regulate CASP8AP2 export from the nucleus to the cytoplasm.

It localises to the cytoplasm. The protein localises to the nucleus. Its subcellular location is the PML body. It is found in the mitochondrion. Its function is as follows. Participates in TNF-alpha-induced blockade of glucocorticoid receptor (GR) transactivation at the nuclear receptor coactivator level, upstream and independently of NF-kappa-B. Suppresses both NCOA2- and NCOA3-induced enhancement of GR transactivation. Involved in TNF-alpha-induced activation of NF-kappa-B via a TRAF2-dependent pathway. Acts as a downstream mediator for CASP8-induced activation of NF-kappa-B. Required for the activation of CASP8 in FAS-mediated apoptosis. Required for histone gene transcription and progression through S phase. The chain is CASP8-associated protein 2 from Homo sapiens (Human).